The primary structure comprises 352 residues: Replication-associated protein (352 aa).

The region spanning 9-117 is the CRESS-DNA virus Rep endonuclease domain; it reads QINAKNYFLT…DGDTLVWGEF (109 aa). The RCR-1 signature appears at 16-19; it reads FLTY. A divalent metal cation contacts are provided by glutamate 50, histidine 58, and histidine 60. The RCR-2 motif lies at 58–60; sequence HLH. Tyrosine 104 serves as the catalytic For DNA cleavage activity. An RCR-3 motif is present at residues 104 to 107; it reads YIDK. Aspartate 108 contacts a divalent metal cation. The binding to RBR1 stretch occupies residues 144 to 154; it reads KEEALQIIREK. The oligomerization stretch occupies residues 157-177; the sequence is EKYLFQFHNLNSNLDRIFDKT. ATP is bound at residue 223–230; the sequence is GDSRTGKT.

Belongs to the geminiviridae Rep protein family. Homooligomer. Interacts with the replication enhancer protein (REn). Interacts with host retinoblastoma-related protein 1 (RBR1), and may thereby induce the transcription of host replicative enzymes even if the cell is not dividing anymore. Interacts with host PCNA. Interacts with host SCE1 protein. Interacts with host GRIK1, GRIK2, GRIMP and histone H3. Requires Mg(2+) as cofactor. It depends on Mn(2+) as a cofactor.

It is found in the host nucleus. Functionally, essential for the replication of viral ssDNA. The closed circular ssDNA genome is first converted to a superhelical dsDNA. Rep binds a specific region at the genome origin of replication. It introduces an endonucleolytic nick within the conserved sequence 5'-TAATATTAC-3' in the intergenic region of the genome present in all geminiviruses, thereby initiating the rolling circle replication (RCR). Following cleavage, binds covalently to the 5'-phosphate of DNA as a tyrosyl ester. The cleavage gives rise to a free 3'-OH that serves as a primer for the cellular DNA polymerase. The polymerase synthesizes the (+) strand DNA by rolling circle mechanism. After one round of replication, a Rep-catalyzed nucleotidyl transfer reaction releases a circular single-stranded virus genome, thereby terminating the replication. Displays origin-specific DNA cleavage, nucleotidyl transferase, ATPase and helicase activities. In Solanum lycopersicum (Tomato), this protein is Replication-associated protein.